Here is a 274-residue protein sequence, read N- to C-terminus: Penicillin-insensitive murein endopeptidase (274 aa).

Residues 1 to 19 (MKKTAIALLAWFVSSASLA) form the signal peptide. 3 disulfides stabilise this stretch: Cys44-Cys265, Cys187-Cys235, and Cys216-Cys223. The Zn(2+) site is built by His110, His113, Asp120, Asp147, His150, and His211. The tract at residues 225 to 274 (DQPLPPPGDGCGAELQSWFEPPKLGTTKPEKKTPPPLPPSCQALLDEHVL) is disordered.

The protein belongs to the peptidase M74 family. Dimer. Zn(2+) is required as a cofactor.

It is found in the periplasm. Its function is as follows. Murein endopeptidase that cleaves the D-alanyl-meso-2,6-diamino-pimelyl amide bond that connects peptidoglycan strands. Likely plays a role in the removal of murein from the sacculus. The chain is Penicillin-insensitive murein endopeptidase from Salmonella paratyphi B (strain ATCC BAA-1250 / SPB7).